Reading from the N-terminus, the 500-residue chain is Probable cytosol aminopeptidase (500 aa).

Mn(2+) is bound by residues Lys-265 and Asp-270. Lys-277 is a catalytic residue. Mn(2+) is bound by residues Asp-288, Asp-347, and Glu-349. Arg-351 is an active-site residue.

This sequence belongs to the peptidase M17 family. The cofactor is Mn(2+).

The protein localises to the cytoplasm. It carries out the reaction Release of an N-terminal amino acid, Xaa-|-Yaa-, in which Xaa is preferably Leu, but may be other amino acids including Pro although not Arg or Lys, and Yaa may be Pro. Amino acid amides and methyl esters are also readily hydrolyzed, but rates on arylamides are exceedingly low.. It catalyses the reaction Release of an N-terminal amino acid, preferentially leucine, but not glutamic or aspartic acids.. In terms of biological role, presumably involved in the processing and regular turnover of intracellular proteins. Catalyzes the removal of unsubstituted N-terminal amino acids from various peptides. The sequence is that of Probable cytosol aminopeptidase from Rickettsia peacockii (strain Rustic).